We begin with the raw amino-acid sequence, 381 residues long: Zinc finger CCCH domain-containing protein 61 (381 aa).

Residues 1-39 (MDVEHHKSGHISRPTVDIPPRKLLSSAKSPSSVSSPLRD) are disordered. Low complexity predominate over residues 21-37 (RKLLSSAKSPSSVSSPL). C3H1-type zinc fingers lie at residues 101-128 (YTGEVCPEFSRHGDCSRGDECGFAHGVF) and 137-159 (YRTEACKDGKHCKRKVCFFAHSP).

As to quaternary structure, interacts with MARD1/FLZ9 and RD21A via its CCCH zing finger domains.

Its subcellular location is the cytoplasm. It is found in the stress granule. The protein localises to the P-body. This Arabidopsis thaliana (Mouse-ear cress) protein is Zinc finger CCCH domain-containing protein 61.